The primary structure comprises 148 residues: 18 kDa antigen (148 aa).

The region spanning 21-131 (TSARPAVMPM…KPRKISVDRG (111 aa)) is the sHSP domain.

This sequence belongs to the small heat shock protein (HSP20) family.

Its function is as follows. Not known. This protein is one of the major immune reactive proteins in mycobacteria. This Mycobacterium leprae (strain TN) protein is 18 kDa antigen (hsp18).